A 66-amino-acid polypeptide reads, in one-letter code: Large ribosomal subunit protein bL35 (66 aa).

This sequence belongs to the bacterial ribosomal protein bL35 family.

The protein is Large ribosomal subunit protein bL35 of Brucella melitensis biotype 1 (strain ATCC 23456 / CCUG 17765 / NCTC 10094 / 16M).